We begin with the raw amino-acid sequence, 320 residues long: ATP-dependent 6-phosphofructokinase (320 aa).

Gly-12 contributes to the ATP binding site. ADP is bound by residues 22 to 26 and 55 to 60; these read RGVVR and RYSVSD. ATP contacts are provided by residues 73-74 and 103-106; these read RF and GDGS. Asp-104 contacts Mg(2+). A substrate-binding site is contributed by 126–128; the sequence is TID. Asp-128 (proton acceptor) is an active-site residue. Arg-155 serves as a coordination point for ADP. Substrate is bound by residues Arg-163 and 170-172; that span reads MGR. Residues 186–188, Lys-212, and 214–216 each bind ADP; these read GCE and KKH. Residues Glu-223, Arg-244, and 250–253 contribute to the substrate site; that span reads HIQR.

The protein belongs to the phosphofructokinase type A (PFKA) family. ATP-dependent PFK group I subfamily. Prokaryotic clade 'B1' sub-subfamily. As to quaternary structure, homotetramer. Mg(2+) is required as a cofactor.

It localises to the cytoplasm. The catalysed reaction is beta-D-fructose 6-phosphate + ATP = beta-D-fructose 1,6-bisphosphate + ADP + H(+). It functions in the pathway carbohydrate degradation; glycolysis; D-glyceraldehyde 3-phosphate and glycerone phosphate from D-glucose: step 3/4. Its activity is regulated as follows. Allosterically activated by ADP and other diphosphonucleosides, and allosterically inhibited by phosphoenolpyruvate. Catalyzes the phosphorylation of D-fructose 6-phosphate to fructose 1,6-bisphosphate by ATP, the first committing step of glycolysis. In Escherichia fergusonii (strain ATCC 35469 / DSM 13698 / CCUG 18766 / IAM 14443 / JCM 21226 / LMG 7866 / NBRC 102419 / NCTC 12128 / CDC 0568-73), this protein is ATP-dependent 6-phosphofructokinase.